The following is a 206-amino-acid chain: MARYIGPKCKLSRREGTDLFLKSGARALESKCNIETPPGVHGQRRGRLSDYGTQLREKQKVRRIYGVLERQFSGYYKEAASRKGATGENLLQLLECRLDNVVYRMGFGSTRAESRQLVSHKSITVNGQTVNIPSYQVKAGDVVAVREKCRNQLRIAQALELCAQRGRVEWVEVDADKKSGVFKNVPARSDLSADINENLIVELYSK.

Residues 96-157 form the S4 RNA-binding domain; that stretch reads CRLDNVVYRM…KCRNQLRIAQ (62 aa).

This sequence belongs to the universal ribosomal protein uS4 family. In terms of assembly, part of the 30S ribosomal subunit. Contacts protein S5. The interaction surface between S4 and S5 is involved in control of translational fidelity.

Its function is as follows. One of the primary rRNA binding proteins, it binds directly to 16S rRNA where it nucleates assembly of the body of the 30S subunit. With S5 and S12 plays an important role in translational accuracy. The chain is Small ribosomal subunit protein uS4 from Stutzerimonas stutzeri (strain A1501) (Pseudomonas stutzeri).